We begin with the raw amino-acid sequence, 216 residues long: uncharacterized protein (216 aa).

4 consecutive transmembrane segments (helical) span residues 5-27 (ISLILVIIFPYISLGLSARIAFS), 98-120 (FLSFFFPSVYVLSIIWIAGVFLL), 125-147 (VLIWSGIFNSLLLLFLGILTFTN), and 185-207 (GTLFVAILSFLFGILVLFTGILG).

It localises to the cell membrane. This is an uncharacterized protein from Aquifex aeolicus (strain VF5).